The primary structure comprises 378 residues: L-lactate dehydrogenase (378 aa).

Positions 1-378 constitute an FMN hydroxy acid dehydrogenase domain; that stretch reads MIISASTDYR…ELSRDSLVKR (378 aa). Tyr-24 serves as a coordination point for substrate. Residues Ser-106 and Gln-127 each coordinate FMN. Position 129 (Tyr-129) interacts with substrate. An FMN-binding site is contributed by Thr-155. Arg-164 serves as a coordination point for substrate. Lys-251 contributes to the FMN binding site. The active-site Proton acceptor is His-275. Position 278 (Arg-278) interacts with substrate. 306–330 contributes to the FMN binding site; that stretch reads DSGIRTGLDVVRMLALGADCTMLGR.

The protein belongs to the FMN-dependent alpha-hydroxy acid dehydrogenase family. The cofactor is FMN.

The protein resides in the cell inner membrane. It catalyses the reaction (S)-lactate + A = pyruvate + AH2. Its function is as follows. Catalyzes the conversion of L-lactate to pyruvate. Is coupled to the respiratory chain. This is L-lactate dehydrogenase from Vibrio cholerae serotype O1 (strain ATCC 39315 / El Tor Inaba N16961).